Reading from the N-terminus, the 211-residue chain is Uracil phosphoribosyltransferase (211 aa).

5-phospho-alpha-D-ribose 1-diphosphate contacts are provided by residues arginine 77, arginine 102, and 129–137 (DPMLATGGS). Residues isoleucine 192 and 197–199 (GDA) contribute to the uracil site. Aspartate 198 serves as a coordination point for 5-phospho-alpha-D-ribose 1-diphosphate.

This sequence belongs to the UPRTase family. The cofactor is Mg(2+).

The catalysed reaction is UMP + diphosphate = 5-phospho-alpha-D-ribose 1-diphosphate + uracil. It participates in pyrimidine metabolism; UMP biosynthesis via salvage pathway; UMP from uracil: step 1/1. With respect to regulation, allosterically activated by GTP. Functionally, catalyzes the conversion of uracil and 5-phospho-alpha-D-ribose 1-diphosphate (PRPP) to UMP and diphosphate. The polypeptide is Uracil phosphoribosyltransferase (Corynebacterium glutamicum (strain R)).